The primary structure comprises 357 residues: Neutral protease 2 homolog UREG_02006 (357 aa).

The N-terminal stretch at 1-19 (MLFSSRFLALAALLGQALA) is a signal peptide. Positions 20 to 179 (LPIDDFSQSD…QSAVPTIEKR (160 aa)) are excised as a propeptide. 2 disulfide bridges follow: Cys-187–Cys-259 and Cys-266–Cys-284. His-308 contacts Zn(2+). The active site involves Glu-309. Residues His-312 and Asp-323 each contribute to the Zn(2+) site.

Belongs to the peptidase M35 family. Zn(2+) is required as a cofactor.

Its subcellular location is the secreted. It carries out the reaction Preferential cleavage of bonds with hydrophobic residues in P1'. Also 3-Asn-|-Gln-4 and 8-Gly-|-Ser-9 bonds in insulin B chain.. Functionally, secreted metalloproteinase that allows assimilation of proteinaceous substrates. Shows high activities on basic nuclear substrates such as histone and protamine. The chain is Neutral protease 2 homolog UREG_02006 from Uncinocarpus reesii (strain UAMH 1704).